A 382-amino-acid polypeptide reads, in one-letter code: Cysteine desulfurase IscS 1 (382 aa).

Residue Asn-149 participates in pyridoxal 5'-phosphate binding. Cys-321 serves as the catalytic Cysteine persulfide intermediate. Cys-321 lines the [2Fe-2S] cluster pocket.

It belongs to the class-V pyridoxal-phosphate-dependent aminotransferase family. NifS/IscS subfamily. Homodimer. Forms a heterotetramer with IscU, interacts with other sulfur acceptors. It depends on pyridoxal 5'-phosphate as a cofactor.

Its subcellular location is the cytoplasm. It catalyses the reaction (sulfur carrier)-H + L-cysteine = (sulfur carrier)-SH + L-alanine. It functions in the pathway cofactor biosynthesis; iron-sulfur cluster biosynthesis. Its function is as follows. Master enzyme that delivers sulfur to a number of partners involved in Fe-S cluster assembly, tRNA modification or cofactor biosynthesis. Catalyzes the removal of elemental sulfur atoms from cysteine to produce alanine. Functions as a sulfur delivery protein for Fe-S cluster synthesis onto IscU, an Fe-S scaffold assembly protein, as well as other S acceptor proteins. The polypeptide is Cysteine desulfurase IscS 1 (Archaeoglobus fulgidus (strain ATCC 49558 / DSM 4304 / JCM 9628 / NBRC 100126 / VC-16)).